A 468-amino-acid chain; its full sequence is uncharacterized protein (468 aa).

Helical transmembrane passes span 13–33 (LEAF…YALF), 40–60 (LMII…HCYL), 76–96 (ALLI…GGTI), 112–132 (LYVT…TSWG), 141–161 (FMGV…AVVA), 194–214 (LLYT…VYGL), 237–257 (VYHF…GSIT), 260–280 (PTIP…ILIQ), 328–348 (CFCA…TVII), 354–374 (FVHS…TMIG), 414–434 (IIEP…TLGV), and 443–463 (AILC…GIGI).

It belongs to the NhaC Na(+)/H(+) (TC 2.A.35) antiporter family.

It is found in the cell membrane. This is an uncharacterized protein from Haemophilus influenzae (strain ATCC 51907 / DSM 11121 / KW20 / Rd).